The chain runs to 212 residues: Lipid A acyltransferase PagP (212 aa).

The first 26 residues, 1–26, serve as a signal peptide directing secretion; that stretch reads MSSTYFHSSLLAATLFSVTLTAPAFA. Residues 29-44 are compositionally biased toward low complexity; that stretch reads NTQNTPQTITTKKPQP. Positions 29 to 50 are disordered; that stretch reads NTQNTPQTITTKKPQPAENTFS. Residues histidine 84, aspartate 127, and serine 128 contribute to the active site.

This sequence belongs to the lipid A palmitoyltransferase family. As to quaternary structure, homodimer.

Its subcellular location is the cell outer membrane. It carries out the reaction a lipid A + a 1,2-diacyl-sn-glycero-3-phosphocholine = a hepta-acyl lipid A + a 2-acyl-sn-glycero-3-phosphocholine. The enzyme catalyses a lipid IVA + a 1,2-diacyl-sn-glycero-3-phosphocholine = a lipid IVB + a 2-acyl-sn-glycero-3-phosphocholine. The catalysed reaction is a lipid IIA + a 1,2-diacyl-sn-glycero-3-phosphocholine = a lipid IIB + a 2-acyl-sn-glycero-3-phosphocholine. Functionally, transfers a fatty acid residue from the sn-1 position of a phospholipid to the N-linked hydroxyfatty acid chain on the proximal unit of lipid A or its precursors. The chain is Lipid A acyltransferase PagP from Proteus mirabilis (strain HI4320).